Here is a 193-residue protein sequence, read N- to C-terminus: Small ribosomal subunit protein eS7 (193 aa).

The protein belongs to the eukaryotic ribosomal protein eS7 family.

The chain is Small ribosomal subunit protein eS7 (rps7) from Dictyostelium discoideum (Social amoeba).